Consider the following 1083-residue polypeptide: Chitin synthase 2 (1083 aa).

Basic and acidic residues-rich tracts occupy residues 1 to 10 (MSSEREERTF) and 18 to 30 (DDVRENISNENQE). Disordered stretches follow at residues 1-248 (MSSE…IADD) and 260-294 (DDDVFAPESDLSDARPHPVDRSSYMSSESQDTLNE). A glycan (N-linked (GlcNAc...) asparagine) is linked at N23. Composition is skewed to polar residues over residues 38-49 (SYASSMAESQTL) and 61-70 (AKLQNKNRTS). Residue N67 is glycosylated (N-linked (GlcNAc...) asparagine). Composition is skewed to basic and acidic residues over residues 78-100 (LPRDLPEIPDGISDRRRVHKEQQ) and 117-128 (RLRDVNSHDKLP). Polar residues-rich tracts occupy residues 132–148 (SPRNLNYQPSVRSSRSG), 177–191 (RPWTPSSRVSGFTRS), and 282–292 (SYMSSESQDTL). A glycan (N-linked (GlcNAc...) asparagine) is linked at N417. Transmembrane regions (helical) follow at residues 708 to 728 (WLNGAFFAAVYSLVHFKQIWF), 747 to 767 (FIQLMFTFFSLANFYLTFYFV), 785 to 805 (TVIFHILRYACVLLISTQFIL), 820 to 840 (ISMIIYSIIMVYTTFATFYII), 860 to 880 (NMIVSILSTIGMYFIMSILYL), 889 to 909 (SAQYFILLPSYICTLQVYAFC), 987 to 1007 (YLVLTWMIGNGILGMAVSEIY), and 1020 to 1040 (FLLWSVAALAVFRAIGSTTFA).

Belongs to the chitin synthase family. Class II subfamily.

Its subcellular location is the cell membrane. The catalysed reaction is [(1-&gt;4)-N-acetyl-beta-D-glucosaminyl](n) + UDP-N-acetyl-alpha-D-glucosamine = [(1-&gt;4)-N-acetyl-beta-D-glucosaminyl](n+1) + UDP + H(+). Functionally, polymerizes chitin, a structural polymer of the cell wall and septum, by transferring the sugar moiety of UDP-GlcNAc to the non-reducing end of the growing chitin polymer. Plays a critical role in cell wall integrity and virulence. The protein is Chitin synthase 2 of Fusarium oxysporum f. sp. lycopersici (strain 4287 / CBS 123668 / FGSC 9935 / NRRL 34936) (Fusarium vascular wilt of tomato).